The sequence spans 263 residues: Proliferating cell nuclear antigen (263 aa).

A DNA-binding region spans residues 61-80 (RCDRTINLGLSLANMSKALK).

Belongs to the PCNA family. As to quaternary structure, homotrimer. Forms a complex with activator 1 heteropentamer in the presence of ATP.

The protein localises to the nucleus. Its function is as follows. This protein is an auxiliary protein of DNA polymerase delta and is involved in the control of eukaryotic DNA replication by increasing the polymerase's processibility during elongation of the leading strand. This is Proliferating cell nuclear antigen (pcn-1) from Caenorhabditis elegans.